The following is a 156-amino-acid chain: Large ribosomal subunit protein eL24 (156 aa).

Positions 110-129 (KESKAKKQETQAAKKAEKAK) are enriched in basic and acidic residues. Positions 110-156 (KESKAKKQETQAAKKAEKAKNAANPKARVTSKQGAKGAPVKVAAKSR) are disordered. Residues 130-156 (NAANPKARVTSKQGAKGAPVKVAAKSR) show a composition bias toward low complexity.

The protein belongs to the eukaryotic ribosomal protein eL24 family. Component of the large ribosomal subunit (LSU). Mature N.crassa ribosomes consist of a small (40S) and a large (60S) subunit. The 40S small subunit contains 1 molecule of ribosomal RNA (18S rRNA) and at least 32 different proteins. The large 60S subunit contains 3 rRNA molecules (26S, 5.8S and 5S rRNA) and at least 42 different proteins.

The protein resides in the cytoplasm. Functionally, component of the ribosome, a large ribonucleoprotein complex responsible for the synthesis of proteins in the cell. The small ribosomal subunit (SSU) binds messenger RNAs (mRNAs) and translates the encoded message by selecting cognate aminoacyl-transfer RNA (tRNA) molecules. The large subunit (LSU) contains the ribosomal catalytic site termed the peptidyl transferase center (PTC), which catalyzes the formation of peptide bonds, thereby polymerizing the amino acids delivered by tRNAs into a polypeptide chain. The nascent polypeptides leave the ribosome through a tunnel in the LSU and interact with protein factors that function in enzymatic processing, targeting, and the membrane insertion of nascent chains at the exit of the ribosomal tunnel. The sequence is that of Large ribosomal subunit protein eL24 (rpl-24) from Neurospora crassa (strain ATCC 24698 / 74-OR23-1A / CBS 708.71 / DSM 1257 / FGSC 987).